We begin with the raw amino-acid sequence, 119 residues long: Beta-2-microglobulin (119 aa).

The first 20 residues, 1–20 (MARFVVVALLVLLSLSGLEA), serve as a signal peptide directing secretion. In terms of domain architecture, Ig-like C1-type spans 25-114 (PKIQVYSRHP…VTLSTPKTVK (90 aa)). Cys-45 and Cys-100 are oxidised to a cystine.

It belongs to the beta-2-microglobulin family. In terms of assembly, heterodimer of an alpha chain and a beta chain. Beta-2-microglobulin is the beta-chain of major histocompatibility complex class I molecules.

It is found in the secreted. In terms of biological role, component of the class I major histocompatibility complex (MHC). Involved in the presentation of peptide antigens to the immune system. This Aotus azarae (Azara's night monkey) protein is Beta-2-microglobulin (B2M).